Here is a 204-residue protein sequence, read N- to C-terminus: Large ribosomal subunit protein uL22m (204 aa).

The transit peptide at 1 to 27 (MAASITASVWGTLLKIHRGLTASGCLP) directs the protein to the mitochondrion.

This sequence belongs to the universal ribosomal protein uL22 family. Component of the mitochondrial ribosome large subunit (39S) which comprises a 16S rRNA and about 50 distinct proteins.

It is found in the mitochondrion. In Xenopus tropicalis (Western clawed frog), this protein is Large ribosomal subunit protein uL22m (mrpl22).